The primary structure comprises 299 residues: Oxygen-dependent coproporphyrinogen-III oxidase (299 aa).

Ser-92 is a substrate binding site. The a divalent metal cation site is built by His-96 and His-106. The active-site Proton donor is the His-106. Residue 108-110 (NVR) participates in substrate binding. Positions 145 and 175 each coordinate a divalent metal cation. The segment at 240 to 275 (YVEFNLVWDRGTLFGLQTGGRTESILMSMPPLVRWE) is important for dimerization. 258–260 (GGR) is a binding site for substrate.

This sequence belongs to the aerobic coproporphyrinogen-III oxidase family. In terms of assembly, homodimer. It depends on a divalent metal cation as a cofactor.

The protein localises to the cytoplasm. The enzyme catalyses coproporphyrinogen III + O2 + 2 H(+) = protoporphyrinogen IX + 2 CO2 + 2 H2O. Its pathway is porphyrin-containing compound metabolism; protoporphyrin-IX biosynthesis; protoporphyrinogen-IX from coproporphyrinogen-III (O2 route): step 1/1. In terms of biological role, involved in the heme biosynthesis. Catalyzes the aerobic oxidative decarboxylation of propionate groups of rings A and B of coproporphyrinogen-III to yield the vinyl groups in protoporphyrinogen-IX. This chain is Oxygen-dependent coproporphyrinogen-III oxidase, found in Salmonella typhi.